We begin with the raw amino-acid sequence, 232 residues long: Nucleoside diphosphate kinase 2, chloroplastic (232 aa).

The transit peptide at M1–A79 directs the protein to the chloroplast. The ATP site is built by K92, F140, R168, T174, R185, and N195. The Pros-phosphohistidine intermediate role is filled by H198.

This sequence belongs to the NDK family. The cofactor is Mg(2+).

Its subcellular location is the plastid. The protein localises to the chloroplast. It carries out the reaction a 2'-deoxyribonucleoside 5'-diphosphate + ATP = a 2'-deoxyribonucleoside 5'-triphosphate + ADP. It catalyses the reaction a ribonucleoside 5'-diphosphate + ATP = a ribonucleoside 5'-triphosphate + ADP. Functionally, major role in the synthesis of nucleoside triphosphates other than ATP. The ATP gamma phosphate is transferred to the NDP beta phosphate via a ping-pong mechanism, using a phosphorylated active-site intermediate. The chain is Nucleoside diphosphate kinase 2, chloroplastic from Nicotiana tabacum (Common tobacco).